A 505-amino-acid chain; its full sequence is Dolichyl pyrophosphate Glc1Man9GlcNAc2 alpha-1,3-glucosyltransferase (505 aa).

Over 1–3 (MAE) the chain is Lumenal. The helical transmembrane segment at 4–24 (IYPSLVQCAIVATAFKVLLFP) threads the bilayer. Over 25–101 (AYKSTDFEVH…DSWQTVYFQR (77 aa)) the chain is Cytoplasmic. Residues 102–122 (WTVIVTELVLLYALQMFVDST) traverse the membrane as a helical segment. Residues 123 to 128 (PGVSKR) are Lumenal-facing. The helical transmembrane segment at 129–149 (AAHAAAVSILLSPGLLIIDHI) threads the bilayer. Residues 150 to 152 (HFQ) lie on the Cytoplasmic side of the membrane. Residues 153-169 (YNGVMYGILIASLVLAK) form a helical membrane-spanning segment. At 170 to 173 (KKSS) the chain is on the lumenal side. Residues 174–194 (LLASGLVFAALLCMKHIYLYL) traverse the membrane as a helical segment. The Cytoplasmic portion of the chain corresponds to 195–224 (APAYFVYLLRVYCLPPKLSPRSIFRIQFFN). A helical transmembrane segment spans residues 225-245 (CVKLGGGIAAIFAAAFGPFAL). Residues 246–319 (KNQIPQIFSR…TSFAVLPDIT (74 aa)) lie on the Lumenal side of the membrane. The helical transmembrane segment at 320–340 (PRMCFVLTLLFQAIPLIKLFM) threads the bilayer. Residues 341-359 (RPTWEGFIGGVTLCGYASF) are Cytoplasmic-facing. The helical transmembrane segment at 360–380 (LFGWHVHEKAILLVIIPFSLI) threads the bilayer. The Lumenal portion of the chain corresponds to 381-386 (ALKDRR). Residues 387–407 (YLGAFRPLAVAGHVSLFPLIF) traverse the membrane as a helical segment. The Cytoplasmic segment spans residues 408–409 (TP). Residues 410–430 (AEFPIKTVYTIFWLVLFLMAF) traverse the membrane as a helical segment. At 431 to 450 (DRLAPAPTRQRLFLFDRFST) the chain is on the lumenal side. Residues 451–471 (AYITVSIPLIFYCSLMHGIIF) traverse the membrane as a helical segment. The Cytoplasmic portion of the chain corresponds to 472-480 (GKSYEFLPL). The chain crosses the membrane as a helical span at residues 481–501 (MFTSSYSAIGVVGSWLGFMVV). Topologically, residues 502-505 (YFTE) are lumenal.

Belongs to the ALG6/ALG8 glucosyltransferase family.

It localises to the endoplasmic reticulum membrane. It carries out the reaction an alpha-D-Glc-(1-&gt;3)-alpha-D-Man-(1-&gt;2)-alpha-D-Man-(1-&gt;2)-alpha-D-Man-(1-&gt;3)-[alpha-D-Man-(1-&gt;2)-alpha-D-Man-(1-&gt;3)-[alpha-D-Man-(1-&gt;2)-alpha-D-Man-(1-&gt;6)]-alpha-D-Man-(1-&gt;6)]-beta-D-Man-(1-&gt;4)-beta-D-GlcNAc-(1-&gt;4)-alpha-D-GlcNAc-diphospho-di-trans,poly-cis-dolichol + a di-trans,poly-cis-dolichyl beta-D-glucosyl phosphate = an alpha-D-Glc-(1-&gt;3)-alpha-D-Glc-(1-&gt;3)-alpha-D-Man-(1-&gt;2)-alpha-D-Man-(1-&gt;2)-alpha-D-Man-(1-&gt;3)-[alpha-D-Man-(1-&gt;2)-alpha-D-Man-(1-&gt;3)-[alpha-D-Man-(1-&gt;2)-alpha-D-Man-(1-&gt;6)]-alpha-D-Man-(1-&gt;6)]-beta-D-Man-(1-&gt;4)-beta-D-GlcNAc-(1-&gt;4)-alpha-D-GlcNAc-diphospho-di-trans,poly-cis-dolichol + a di-trans,poly-cis-dolichyl phosphate + H(+). It participates in protein modification; protein glycosylation. Functionally, dolichyl pyrophosphate Glc1Man9GlcNAc2 alpha-1,3-glucosyltransferase that operates in the biosynthetic pathway of dolichol-linked oligosaccharides, the glycan precursors employed in protein asparagine (N)-glycosylation. The assembly of dolichol-linked oligosaccharides begins on the cytosolic side of the endoplasmic reticulum membrane and finishes in its lumen. The sequential addition of sugars to dolichol pyrophosphate produces dolichol-linked oligosaccharides containing fourteen sugars, including two GlcNAcs, nine mannoses and three glucoses. Once assembled, the oligosaccharide is transferred from the lipid to nascent proteins by oligosaccharyltransferases. In the lumen of the endoplasmic reticulum, adds the second glucose residue from dolichyl phosphate glucose (Dol-P-Glc) onto the lipid-linked oligosaccharide intermediate Glc(1)Man(9)GlcNAc(2)-PP-Dol to produce Glc(2)Man(9)GlcNAc(2)-PP-Dol. The sequence is that of Dolichyl pyrophosphate Glc1Man9GlcNAc2 alpha-1,3-glucosyltransferase (alg-8) from Neurospora crassa (strain ATCC 24698 / 74-OR23-1A / CBS 708.71 / DSM 1257 / FGSC 987).